The chain runs to 476 residues: Nitrosuccinate lyase (476 aa).

Arg-137, Arg-140, and Arg-201 together coordinate fumarate. Ser-302 (proton acceptor) is an active-site residue. The fumarate site is built by Lys-308 and Asn-310. Arg-341 serves as the catalytic Proton donor.

This sequence belongs to the class-II fumarase/aspartase family. As to quaternary structure, homotetramer.

It carries out the reaction 2-nitrobutanedioate = fumarate + nitrite + H(+). The protein operates within antibiotic biosynthesis. Its function is as follows. Part of a gene cluster involved in the biosynthesis of cremeomycin, a light-sensitive o-diazoquinone with antibacterial and antiproliferative effects. Catalyzes the formation of nitrous acid from nitrosuccinic acid (2-nitrobutanedioate) by elimination of its nitro group. The polypeptide is Nitrosuccinate lyase (Streptomyces cremeus).